The primary structure comprises 950 residues: Protocadherin alpha-9 (950 aa).

A signal peptide spans 1-29; that stretch reads MLYSSRGDPEGQPLLLSLLILAMWVVGSG. Cadherin domains are found at residues 30-133, 134-242, 243-350, 351-455, 456-565, and 588-678; these read QLHY…PPVF, PATQ…APVF, DRTL…APQL, TIKT…APAF, AQPE…APAL, and GVVV…APKS. At 30-697 the chain is on the extracellular side; the sequence is QLHYSVPEEA…GPEVTLVDVN (668 aa). N-linked (GlcNAc...) asparagine glycosylation is found at Asn254 and Asn265. Asn548 is a glycosylation site (N-linked (GlcNAc...) asparagine). Residues 698 to 718 form a helical membrane-spanning segment; that stretch reads VYLIIAICAVSSLLVLTLLLY. The Cytoplasmic portion of the chain corresponds to 719–950; sequence TVLRCSAMPT…GNSTTDNSDQ (232 aa). Residues 734-737 form a PXXP 1 repeat; the sequence is PGKP. Positions 734–894 are 5 X 4 AA repeats of P-X-X-P; sequence PGKPTLVCSS…PDKFIIPGSP (161 aa). Disordered stretches follow at residues 759 to 808 and 827 to 950; these read CSGE…DWRY and ILRA…NSDQ. Polar residues predominate over residues 789-798; the sequence is PSASSDSSGK. PXXP repeat units lie at residues 799-802, 832-835, 873-876, and 891-894; these read PRQP, PGGP, PGNP, and PGSP. Over residues 909–923 the composition is skewed to basic and acidic residues; that stretch reads DKSDFITFGKKEETK.

The protein resides in the cell membrane. Potential calcium-dependent cell-adhesion protein. May be involved in the establishment and maintenance of specific neuronal connections in the brain. In Pan troglodytes (Chimpanzee), this protein is Protocadherin alpha-9 (PCDHA9).